The sequence spans 205 residues: GTP cyclohydrolase-2 (205 aa).

A GTP-binding site is contributed by 49–53 (RIHSE). Residues C54, C65, and C67 each contribute to the Zn(2+) site. GTP contacts are provided by residues Q70, 92-94 (EGR), and T114. D126 serves as the catalytic Proton acceptor. The active-site Nucleophile is the R128. T149 and K154 together coordinate GTP.

It belongs to the GTP cyclohydrolase II family. The cofactor is Zn(2+).

It catalyses the reaction GTP + 4 H2O = 2,5-diamino-6-hydroxy-4-(5-phosphoribosylamino)-pyrimidine + formate + 2 phosphate + 3 H(+). Its pathway is cofactor biosynthesis; riboflavin biosynthesis; 5-amino-6-(D-ribitylamino)uracil from GTP: step 1/4. Catalyzes the conversion of GTP to 2,5-diamino-6-ribosylamino-4(3H)-pyrimidinone 5'-phosphate (DARP), formate and pyrophosphate. The chain is GTP cyclohydrolase-2 from Shewanella denitrificans (strain OS217 / ATCC BAA-1090 / DSM 15013).